The following is a 129-amino-acid chain: Large ribosomal subunit protein bL12c (129 aa).

The protein belongs to the bacterial ribosomal protein bL12 family. Homodimer. Part of the ribosomal stalk of the 50S ribosomal subunit. Forms a multimeric L10(L12)X complex, where L10 forms an elongated spine to which 2 to 4 L12 dimers bind in a sequential fashion. Binds GTP-bound translation factors.

It is found in the plastid. Its subcellular location is the chloroplast. In terms of biological role, forms part of the ribosomal stalk which helps the ribosome interact with GTP-bound translation factors. Is thus essential for accurate translation. This Tupiella akineta (Green alga) protein is Large ribosomal subunit protein bL12c.